The primary structure comprises 71 residues: Bacteriocin carnobacteriocin-A (71 aa).

A propeptide spanning residues 1–18 (MNNVKELSIKEMQQVTGG) is cleaved from the precursor. Cys40 and Cys69 are disulfide-bonded.

It is found in the secreted. Has antibacterial activity. The protein is Bacteriocin carnobacteriocin-A (cbnBA) of Carnobacterium maltaromaticum (Carnobacterium piscicola).